Here is a 423-residue protein sequence, read N- to C-terminus: Imidazolonepropionase (423 aa).

2 residues coordinate Fe(3+): histidine 78 and histidine 80. Zn(2+)-binding residues include histidine 78 and histidine 80. Residues arginine 87, tyrosine 150, and histidine 183 each coordinate 4-imidazolone-5-propanoate. Tyrosine 150 is an N-formimidoyl-L-glutamate binding site. Position 247 (histidine 247) interacts with Fe(3+). Histidine 247 is a Zn(2+) binding site. Residue glutamate 250 participates in 4-imidazolone-5-propanoate binding. Position 322 (aspartate 322) interacts with Fe(3+). Aspartate 322 is a binding site for Zn(2+). N-formimidoyl-L-glutamate contacts are provided by asparagine 324 and glycine 326. Serine 327 contributes to the 4-imidazolone-5-propanoate binding site.

It belongs to the metallo-dependent hydrolases superfamily. HutI family. Zn(2+) serves as cofactor. Requires Fe(3+) as cofactor.

The protein localises to the cytoplasm. The catalysed reaction is 4-imidazolone-5-propanoate + H2O = N-formimidoyl-L-glutamate. Its pathway is amino-acid degradation; L-histidine degradation into L-glutamate; N-formimidoyl-L-glutamate from L-histidine: step 3/3. Catalyzes the hydrolytic cleavage of the carbon-nitrogen bond in imidazolone-5-propanoate to yield N-formimidoyl-L-glutamate. It is the third step in the universal histidine degradation pathway. This chain is Imidazolonepropionase, found in Bacillus cereus (strain ATCC 10987 / NRS 248).